We begin with the raw amino-acid sequence, 311 residues long: tRNA(Ile)-lysidine synthase (311 aa).

An ATP-binding site is contributed by 32 to 37 (SGGPDS).

Belongs to the tRNA(Ile)-lysidine synthase family.

The protein resides in the cytoplasm. It carries out the reaction cytidine(34) in tRNA(Ile2) + L-lysine + ATP = lysidine(34) in tRNA(Ile2) + AMP + diphosphate + H(+). Its function is as follows. Ligates lysine onto the cytidine present at position 34 of the AUA codon-specific tRNA(Ile) that contains the anticodon CAU, in an ATP-dependent manner. Cytidine is converted to lysidine, thus changing the amino acid specificity of the tRNA from methionine to isoleucine. This chain is tRNA(Ile)-lysidine synthase, found in Cutibacterium acnes (strain DSM 16379 / KPA171202) (Propionibacterium acnes).